The chain runs to 105 residues: Large ribosomal subunit protein bL21 (105 aa).

Belongs to the bacterial ribosomal protein bL21 family. Part of the 50S ribosomal subunit. Contacts protein L20.

Functionally, this protein binds to 23S rRNA in the presence of protein L20. This Rickettsia bellii (strain OSU 85-389) protein is Large ribosomal subunit protein bL21.